The chain runs to 301 residues: Diaminopimelate epimerase (301 aa).

Substrate is bound by residues Asn-15, Gln-47, and Asn-67. Residue Cys-76 is the Proton donor of the active site. Substrate-binding positions include 77-78, Asn-163, Asn-197, and 215-216; these read GN and ER. Residue Cys-224 is the Proton acceptor of the active site. 225 to 226 contacts substrate; that stretch reads GS.

It belongs to the diaminopimelate epimerase family. Homodimer.

Its subcellular location is the cytoplasm. The enzyme catalyses (2S,6S)-2,6-diaminopimelate = meso-2,6-diaminopimelate. Its pathway is amino-acid biosynthesis; L-lysine biosynthesis via DAP pathway; DL-2,6-diaminopimelate from LL-2,6-diaminopimelate: step 1/1. In terms of biological role, catalyzes the stereoinversion of LL-2,6-diaminopimelate (L,L-DAP) to meso-diaminopimelate (meso-DAP), a precursor of L-lysine and an essential component of the bacterial peptidoglycan. The protein is Diaminopimelate epimerase of Rhizobium etli (strain ATCC 51251 / DSM 11541 / JCM 21823 / NBRC 15573 / CFN 42).